Here is a 452-residue protein sequence, read N- to C-terminus: Phosphoglucosamine mutase (452 aa).

Serine 103 (phosphoserine intermediate) is an active-site residue. Mg(2+) is bound by residues serine 103, aspartate 243, aspartate 245, and aspartate 247. At serine 103 the chain carries Phosphoserine.

The protein belongs to the phosphohexose mutase family. Mg(2+) serves as cofactor. Activated by phosphorylation.

The enzyme catalyses alpha-D-glucosamine 1-phosphate = D-glucosamine 6-phosphate. Functionally, catalyzes the conversion of glucosamine-6-phosphate to glucosamine-1-phosphate. The polypeptide is Phosphoglucosamine mutase (Exiguobacterium sp. (strain ATCC BAA-1283 / AT1b)).